The following is a 1610-amino-acid chain: Adenylate cyclase type 10 (1610 aa).

Guanylate cyclase domains are found at residues 42 to 179 (VLMF…RLAQ) and 293 to 418 (TIVF…ARMM). D47 and I48 together coordinate Mg(2+). Residue 47–52 (DISGFT) participates in ATP binding. K95 contacts hydrogencarbonate. D99 serves as a coordination point for Mg(2+). Residues D99 and K144 each contribute to the ATP site. 3 residues coordinate hydrogencarbonate: V167, R176, and M337. Residues V406 and 412 to 416 (NLAAR) contribute to the ATP site.

Belongs to the adenylyl cyclase class-4/guanylyl cyclase family. Mg(2+) is required as a cofactor. It depends on Mn(2+) as a cofactor. Post-translationally, cleavage may occur to generate the active 48 kDa form. As to expression, detected in airway epithelial cells and testis (at protein level). Weakly expressed in multiple tissues. Expressed in brain, heart, kidney, liver, lung, pancreas, peripheral blood leukocytes, placenta, skeletal muscle, stomach, thymus, airway epithelial cells, duodenum, jejunum and ileum. Very low level of expression in bone.

The protein resides in the cell membrane. It is found in the cytoplasm. The protein localises to the cytoskeleton. Its subcellular location is the perinuclear region. It localises to the nucleus. The protein resides in the cell projection. It is found in the cilium. The protein localises to the mitochondrion. It carries out the reaction ATP = 3',5'-cyclic AMP + diphosphate. Activated by manganese or magnesium ions. In the presence of magnesium ions, the enzyme is activated by bicarbonate. In the presence of manganese ions, the enzyme is inhibited by bicarbonate. In the absence of magnesium and bicarbonate, the enzyme is weakly activated by calcium. Calcium mildly increases the enzyme activity, also in the presence of magnesium ions. Its function is as follows. Catalyzes the formation of the signaling molecule cAMP. May function as sensor that mediates responses to changes in cellular bicarbonate and CO(2) levels. Has a critical role in mammalian spermatogenesis by producing the cAMP which regulates cAMP-responsive nuclear factors indispensable for sperm maturation in the epididymis. Induces capacitation, the maturational process that sperm undergo prior to fertilization. Involved in ciliary beat regulation. The protein is Adenylate cyclase type 10 (ADCY10) of Homo sapiens (Human).